We begin with the raw amino-acid sequence, 396 residues long: MVLLSFSLRFIAFTLTITLTQIADGFQSRMLMNNGLALSPQMGWNSWNHFQCNINETLIKQTADAMVSSGLSAIGYKYINIDDCWGELKRDSQGSLVAKASTFPSGIKALSDYVHSKGLKLGIYSDAGTLTCSQTMPGSLGHEEQDAKTFASWGIDYLKYDNCENTGTSPRERYPKMSKALLNSGRSIFFSLCEWGQEDPATWAGDIGNSWRTTGDIQDNWKSMTLIADQNDRWASYARPGSWNDPDMLEVGNGGMTKEEYMSHFSIWALAKAPLLIGCDLRSMDKVTFELLSNKEVIAVNQDKLGIQGKKVKKEGDLEVWAGPLSKKRVAVILWNRGSASANITARWAEIGLNSSDIVNARDLWEHSTYSCVKKQLSALVEPHACKMYTLTRRKA.

Residues 1 to 25 form the signal peptide; the sequence is MVLLSFSLRFIAFTLTITLTQIADG. 2 cysteine pairs are disulfide-bonded: cysteine 52/cysteine 84 and cysteine 132/cysteine 163. A glycan (N-linked (GlcNAc...) asparagine) is linked at asparagine 55. Substrate is bound by residues 82–83 and lysine 159; that span reads DD. The Nucleophile role is filled by aspartate 161. Substrate is bound by residues 194 to 198, arginine 212, and aspartate 216; that span reads EWGQE. The Proton donor role is filled by aspartate 216. Residues asparagine 343 and asparagine 354 are each glycosylated (N-linked (GlcNAc...) asparagine).

Belongs to the glycosyl hydrolase 27 family. As to quaternary structure, homodimer.

The protein resides in the secreted. It localises to the cell wall. The protein localises to the extracellular space. It is found in the apoplast. It catalyses the reaction Hydrolysis of terminal, non-reducing alpha-D-galactose residues in alpha-D-galactosides, including galactose oligosaccharides, galactomannans and galactolipids.. In terms of biological role, may regulate leaf (and possibly other organ) development by functioning in cell wall loosening and cell wall expansion. The sequence is that of Alpha-galactosidase 2 from Arabidopsis thaliana (Mouse-ear cress).